The chain runs to 427 residues: MKLRTKAKALRGRLRVPGDKSISHRAVIFGAIAEGQTVIHGLLRGQDVLATIQAFRDLGVTIYESADSLIIEGRGFKGLKPAQKPLDMGNSGTSMRLLAGLLAAQDFSVQLFGDDSLSRRPMDRITIPLSLMGAELSGQGEKELPPLIVKGCQGLRPIHYQLPVASAQVKSAILLAALQTQGETVILEKELTRNHTEEMIEQFGGKLSVAGKQISIKGPQRLQGQTLQIPGDLSSAAFWLAAGLIVPGSDLVLENVGINPTRTGLLEVIEKMGGQLSYQAVDKDIQTATLKVSYSTLKGIEISGDLIPRLIDELPVIALLATQAQGTTYIRDAQELRVKETDRIQAVTDVLGQMGADIQATEDGMVIRGKTPLHGAAVSTCGDHRIGMMTAIAALLVEEGQVTLERAEAILTSYPDFFKDLERLWHD.

3 residues coordinate 3-phosphoshikimate: Lys20, Ser21, and Arg25. Lys20 lines the phosphoenolpyruvate pocket. Phosphoenolpyruvate-binding residues include Gly92 and Arg120. Residues Ser166, Gln168, Asp312, and Lys339 each coordinate 3-phosphoshikimate. Residue Gln168 participates in phosphoenolpyruvate binding. The active-site Proton acceptor is Asp312. Residues Arg343 and Arg385 each contribute to the phosphoenolpyruvate site.

Belongs to the EPSP synthase family. Monomer.

The protein resides in the cytoplasm. The enzyme catalyses 3-phosphoshikimate + phosphoenolpyruvate = 5-O-(1-carboxyvinyl)-3-phosphoshikimate + phosphate. The protein operates within metabolic intermediate biosynthesis; chorismate biosynthesis; chorismate from D-erythrose 4-phosphate and phosphoenolpyruvate: step 6/7. Functionally, catalyzes the transfer of the enolpyruvyl moiety of phosphoenolpyruvate (PEP) to the 5-hydroxyl of shikimate-3-phosphate (S3P) to produce enolpyruvyl shikimate-3-phosphate and inorganic phosphate. In Streptococcus equi subsp. zooepidemicus (strain MGCS10565), this protein is 3-phosphoshikimate 1-carboxyvinyltransferase.